A 313-amino-acid chain; its full sequence is Malate dehydrogenase (313 aa).

NAD(+)-binding positions include 11-16 and aspartate 35; that span reads GAGNIG. Residues arginine 86 and arginine 92 each coordinate substrate. NAD(+)-binding positions include asparagine 99 and 122–124; that span reads ISN. The substrate site is built by asparagine 124 and arginine 155. Histidine 179 (proton acceptor) is an active-site residue.

Belongs to the LDH/MDH superfamily. MDH type 3 family.

It catalyses the reaction (S)-malate + NAD(+) = oxaloacetate + NADH + H(+). Its function is as follows. Catalyzes the reversible oxidation of malate to oxaloacetate. This chain is Malate dehydrogenase, found in Sorangium cellulosum (strain So ce56) (Polyangium cellulosum (strain So ce56)).